Consider the following 509-residue polypeptide: GMP synthase [glutamine-hydrolyzing] (509 aa).

One can recognise a Glutamine amidotransferase type-1 domain in the interval 4-193 (KILILDFGSQ…VVHICGCSQD (190 aa)). Residue C79 is the Nucleophile of the active site. Catalysis depends on residues H167 and E169. One can recognise a GMPS ATP-PPase domain in the interval 194 to 384 (WTPDAFVETT…LGIDDIILKR (191 aa)). Residue 221-227 (SGGVDSS) coordinates ATP.

In terms of assembly, homodimer.

It carries out the reaction XMP + L-glutamine + ATP + H2O = GMP + L-glutamate + AMP + diphosphate + 2 H(+). It participates in purine metabolism; GMP biosynthesis; GMP from XMP (L-Gln route): step 1/1. Its function is as follows. Catalyzes the synthesis of GMP from XMP. This is GMP synthase [glutamine-hydrolyzing] from Cytophaga hutchinsonii (strain ATCC 33406 / DSM 1761 / CIP 103989 / NBRC 15051 / NCIMB 9469 / D465).